We begin with the raw amino-acid sequence, 275 residues long: Large ribosomal subunit protein uL2c (275 aa).

The disordered stretch occupies residues 225–259 (KNPVDHPHGGGEGRAPIGRSTPVTPWGKPALGRRT).

This sequence belongs to the universal ribosomal protein uL2 family. Part of the 50S ribosomal subunit.

It localises to the plastid. Its subcellular location is the cyanelle. The chain is Large ribosomal subunit protein uL2c (rpl2) from Cyanophora paradoxa.